The chain runs to 426 residues: Adenylosuccinate synthetase (426 aa).

GTP-binding positions include 18–24 and 46–48; these read GDEGKGK and GHT. Asp-19 acts as the Proton acceptor in catalysis. Residues Asp-19 and Gly-46 each contribute to the Mg(2+) site. IMP is bound by residues 19–22, 44–47, Thr-136, Arg-150, Gln-222, Thr-237, and Arg-301; these read DEGK and NAGH. The Proton donor role is filled by His-47. Substrate is bound at residue 297 to 303; the sequence is VTTKRKR. GTP is bound by residues Arg-303, 329–331, and 413–415; these read KID and GTG.

The protein belongs to the adenylosuccinate synthetase family. In terms of assembly, homodimer. Requires Mg(2+) as cofactor.

The protein localises to the cytoplasm. It carries out the reaction IMP + L-aspartate + GTP = N(6)-(1,2-dicarboxyethyl)-AMP + GDP + phosphate + 2 H(+). Its pathway is purine metabolism; AMP biosynthesis via de novo pathway; AMP from IMP: step 1/2. In terms of biological role, plays an important role in the de novo pathway and in the salvage pathway of purine nucleotide biosynthesis. Catalyzes the first committed step in the biosynthesis of AMP from IMP. The polypeptide is Adenylosuccinate synthetase (Schistosoma mansoni (Blood fluke)).